The sequence spans 33 residues: Antimicrobial peptide MBP-1 (33 aa).

In terms of tissue distribution, predominantly in the embryo portion of the kernel.

The protein resides in the secreted. Functionally, inhibitor of both bacterial and fungal growth in vitro. The chain is Antimicrobial peptide MBP-1 from Zea mays (Maize).